A 960-amino-acid chain; its full sequence is Gamma-aminobutyric acid type B receptor subunit 1 (960 aa).

The signal sequence occupies residues 1 to 19 (MLLLLLVPLFLRPLGAGGA). Residues 20 to 590 (QTPNVTSEGC…KTFRFLSQKL (571 aa)) are Extracellular-facing. N-linked (GlcNAc...) asparagine glycosylation is found at Asn-23 and Asn-83. Sushi domains lie at 29-95 (CQII…PSRC) and 97-158 (RICS…HCQV). Cystine bridges form between Cys-99-Cys-144, Cys-130-Cys-156, and Cys-219-Cys-245. 4 residues coordinate 4-aminobutanoate: Ser-246, Ser-269, His-286, and Tyr-366. Cys-375 and Cys-409 are disulfide-bonded. Asn-408 and Asn-439 each carry an N-linked (GlcNAc...) asparagine glycan. Glu-465 serves as a coordination point for 4-aminobutanoate. N-linked (GlcNAc...) asparagine glycans are attached at residues Asn-481, Asn-501, and Asn-513. Residues 591-611 (FISVSVLSSLGIVLAVVCLSF) traverse the membrane as a helical segment. Residues 612-630 (NIYNSHVRYIQNSQPNLNN) are Cytoplasmic-facing. Residues 631–651 (LTAVGCSLALAAVFPLGLDGY) form a helical membrane-spanning segment. At 652 to 666 (HIGRSQFPFVCQARL) the chain is on the extracellular side. Residues 667–687 (WLLGLGFSLGYGSMFTKIWWV) traverse the membrane as a helical segment. Residues 688-709 (HTVFTKKEEKKEWRKTLEPWKL) lie on the Cytoplasmic side of the membrane. Residues 710 to 730 (YATVGLLVGMDILTLAIWQIV) traverse the membrane as a helical segment. The Extracellular segment spans residues 731–767 (DPLHRTIETFAKEEPKEDIDVSILPQLEHCSSKKMNT). A helical membrane pass occupies residues 768-788 (WLGIFYGYKGLLLLLGIFLAY). At 789–803 (ETKSVSTEKINDHRA) the chain is on the cytoplasmic side. The helical transmembrane segment at 804–824 (VGMAIYNVAVLCLITAPVTMI) threads the bilayer. The Extracellular portion of the chain corresponds to 825–832 (LSSQQDAA). The chain crosses the membrane as a helical span at residues 833–853 (FAFASLAIVFSSYITLVVLFV). The Cytoplasmic segment spans residues 854-960 (PKMRRLITRG…DGSRVHLLYK (107 aa)). Disordered stretches follow at residues 866–891 (QSEA…RLLE) and 908–960 (VSEL…LLYK). A compositionally biased stretch (polar residues) spans 867-879 (SEAQDTMKTGSST). Residues 868 to 924 (EAQDTMKTGSSTNNNEEEKSRLLEKENRELEKIIAEKEERVSELRHQLQSRQQIRSR) are a coiled coil. The residue at position 872 (Thr-872) is a Phosphothreonine. The interval 887–915 (SRLLEKENRELEKIIAEKEERVSELRHQL) is interaction with ATF4. Thr-929 bears the Phosphothreonine mark.

Belongs to the G-protein coupled receptor 3 family. GABA-B receptor subfamily. As to quaternary structure, heterodimer of GABBR1 and GABBR2. Homodimers may form, but are inactive. Interacts (via C-terminus) with ATF4 (via leucine zipper domain). Interacts with JAKMIP1. Interacts with KCTD8, KCTD12, KCTD12B and KCTD16; this interaction determines the pharmacology and kinetics of the receptor response, the KCTD proteins markedly accelerating the GABA-B response, although to different extents. Expressed in neuronal tissue including cortex, cerebellum and spinal cord. Not detected in non-neuronal tissues including heart, liver, spleen and kidney.

The protein resides in the cell membrane. The protein localises to the postsynaptic cell membrane. Its subcellular location is the cell projection. It localises to the dendrite. Its function is as follows. Component of a heterodimeric G-protein coupled receptor for GABA, formed by GABBR1 and GABBR2. Within the heterodimeric GABA receptor, only GABBR1 seems to bind agonists, while GABBR2 mediates coupling to G proteins. Ligand binding causes a conformation change that triggers signaling via guanine nucleotide-binding proteins (G proteins) and modulates the activity of down-stream effectors, such as adenylate cyclase. Signaling inhibits adenylate cyclase, stimulates phospholipase A2, activates potassium channels, inactivates voltage-dependent calcium-channels and modulates inositol phospholipid hydrolysis. Calcium is required for high affinity binding to GABA. Plays a critical role in the fine-tuning of inhibitory synaptic transmission. Pre-synaptic GABA receptor inhibits neurotransmitter release by down-regulating high-voltage activated calcium channels, whereas postsynaptic GABA receptor decreases neuronal excitability by activating a prominent inwardly rectifying potassium (Kir) conductance that underlies the late inhibitory postsynaptic potentials. Not only implicated in synaptic inhibition but also in hippocampal long-term potentiation, slow wave sleep, muscle relaxation and antinociception. This is Gamma-aminobutyric acid type B receptor subunit 1 (Gabbr1) from Mus musculus (Mouse).